The following is a 311-amino-acid chain: Methionyl-tRNA formyltransferase (311 aa).

110–113 provides a ligand contact to (6S)-5,6,7,8-tetrahydrofolate; it reads SLLP.

Belongs to the Fmt family.

The enzyme catalyses L-methionyl-tRNA(fMet) + (6R)-10-formyltetrahydrofolate = N-formyl-L-methionyl-tRNA(fMet) + (6S)-5,6,7,8-tetrahydrofolate + H(+). In terms of biological role, attaches a formyl group to the free amino group of methionyl-tRNA(fMet). The formyl group appears to play a dual role in the initiator identity of N-formylmethionyl-tRNA by promoting its recognition by IF2 and preventing the misappropriation of this tRNA by the elongation apparatus. This is Methionyl-tRNA formyltransferase from Streptococcus pneumoniae (strain P1031).